The primary structure comprises 432 residues: 3-phosphoshikimate 1-carboxyvinyltransferase (432 aa).

3-phosphoshikimate is bound by residues K23, S24, and R28. K23 serves as a coordination point for phosphoenolpyruvate. Positions 95 and 123 each coordinate phosphoenolpyruvate. 3-phosphoshikimate is bound by residues S167, Q169, D317, and K344. Position 169 (Q169) interacts with phosphoenolpyruvate. The active-site Proton acceptor is the D317. Residues R348 and R390 each coordinate phosphoenolpyruvate.

The protein belongs to the EPSP synthase family. In terms of assembly, monomer.

The protein resides in the cytoplasm. The catalysed reaction is 3-phosphoshikimate + phosphoenolpyruvate = 5-O-(1-carboxyvinyl)-3-phosphoshikimate + phosphate. Its pathway is metabolic intermediate biosynthesis; chorismate biosynthesis; chorismate from D-erythrose 4-phosphate and phosphoenolpyruvate: step 6/7. In terms of biological role, catalyzes the transfer of the enolpyruvyl moiety of phosphoenolpyruvate (PEP) to the 5-hydroxyl of shikimate-3-phosphate (S3P) to produce enolpyruvyl shikimate-3-phosphate and inorganic phosphate. The protein is 3-phosphoshikimate 1-carboxyvinyltransferase of Staphylococcus carnosus (strain TM300).